We begin with the raw amino-acid sequence, 278 residues long: 4-deoxy-L-threo-5-hexosulose-uronate ketol-isomerase (278 aa).

Zn(2+) is bound by residues histidine 196, histidine 198, glutamate 203, and histidine 245.

Belongs to the KduI family. Zn(2+) is required as a cofactor.

It catalyses the reaction 5-dehydro-4-deoxy-D-glucuronate = 3-deoxy-D-glycero-2,5-hexodiulosonate. The protein operates within glycan metabolism; pectin degradation; 2-dehydro-3-deoxy-D-gluconate from pectin: step 4/5. Functionally, catalyzes the isomerization of 5-dehydro-4-deoxy-D-glucuronate to 3-deoxy-D-glycero-2,5-hexodiulosonate. The polypeptide is 4-deoxy-L-threo-5-hexosulose-uronate ketol-isomerase (Shigella sonnei (strain Ss046)).